Reading from the N-terminus, the 91-residue chain is Cell division topological specificity factor (91 aa).

This sequence belongs to the MinE family.

Functionally, prevents the cell division inhibition by proteins MinC and MinD at internal division sites while permitting inhibition at polar sites. This ensures cell division at the proper site by restricting the formation of a division septum at the midpoint of the long axis of the cell. In Wigglesworthia glossinidia brevipalpis, this protein is Cell division topological specificity factor.